The primary structure comprises 170 residues: Pollen-specific protein C13 (170 aa).

The N-terminal stretch at 1-27 is a signal peptide; the sequence is MASVPAPATTTAAVILCLCVVLSCAAA. 3 disulfide bridges follow: cysteine 43–cysteine 114, cysteine 46–cysteine 155, and cysteine 67–cysteine 102. Asparagine 53 carries N-linked (GlcNAc...) asparagine glycosylation.

This sequence belongs to the Ole e I family. As to expression, pollen.

This Zea mays (Maize) protein is Pollen-specific protein C13 (MGS1).